The primary structure comprises 250 residues: MSTRAEVCAVACAELFRDAGEIMISPMTNMASVGARLARLTFAPDILLTDGEAQLLADTPALGKTGAPNRIEGWMPFGRVFETLAWGRRHVVMGANQVDRYGNQNISAFGPLQRPTRQMFGVRGSPGNTINHATSYWVGNHCKRVFVEAVDVVSGIGYDKVDPDNPAFRFVNVYRVVSNLGVFDFGGPDHSMRAVSLHPGVTPGDVRDATSFEVHDLDAAEQTRLPTDDELHLIRAVIDPKSLRDREIRS.

It belongs to the 3-oxoacid CoA-transferase subunit B family. As to quaternary structure, heterotetramer composed of 2 IpdA subunits and 2 IpdB subunits.

The enzyme catalyses (3E)-2-(2-carboxylatoethyl)-3-methyl-6-oxocyclohex-1-ene-1-carboxyl-CoA + H2O = 6-methyl-3,7-dioxodecanedioyl-CoA. It participates in steroid metabolism; cholesterol degradation. Involved in the final steps of cholesterol and steroid degradation. Opens the last steroid ring of cholesterol by catalyzing the hydrolysis of (3E)-2-(2-carboxylatoethyl)-3-methyl-6-oxocyclohex-1-ene-1-carboxyl-CoA (COCHEA-CoA) to 6-methyl-3,7-dioxodecanedioyl-CoA (MeDODA-CoA). This chain is Cholesterol ring-cleaving hydrolase IpdB subunit, found in Mycobacterium bovis (strain ATCC BAA-935 / AF2122/97).